The sequence spans 386 residues: D(1)-like dopamine receptor (386 aa).

A compositionally biased stretch (polar residues) spans 1 to 10; it reads MEIFTTTRGT. Residues 1-28 are disordered; sequence MEIFTTTRGTSAGPEPAPGGHGGTDSPR. Topologically, residues 1–35 are extracellular; that stretch reads MEIFTTTRGTSAGPEPAPGGHGGTDSPRTSDLSLR. A helical membrane pass occupies residues 36 to 56; sequence ALTGCVLCILIVSTLLGNALV. The Cytoplasmic segment spans residues 57–72; the sequence is CAAVIKFRHLRSKVTN. Residues 73 to 92 form a helical membrane-spanning segment; it reads AFVISLAVSDLFVAVLVMPW. Over 93 to 109 the chain is Extracellular; that stretch reads RAVSEVAGVWLFGAFCD. A disulfide bridge links Cys-108 with Cys-188. The helical transmembrane segment at 110–131 threads the bilayer; sequence TWVAFDIMCSTASILHLCIISM. At 132-150 the chain is on the cytoplasmic side; it reads DRYWAISSPFRYERRMTPR. A helical transmembrane segment spans residues 151-175; sequence FGCVMIGVAWTLSVLISFIPVQLNW. Topologically, residues 176 to 195 are extracellular; sequence HARGRERTDPGDCNASLNRT. Asn-189 and Asn-193 each carry an N-linked (GlcNAc...) asparagine glycan. Residues 196-220 form a helical membrane-spanning segment; sequence YAISSSLISFYIPVLIMVGTYTRIF. Over 221–266 the chain is Cytoplasmic; it reads RIGRTQIRRISSLERAAPRATRGPALCDEESSLKTSFRRETKVLKT. A helical membrane pass occupies residues 267-292; it reads LSVIMGVFVFCWLPFFVLNCMVPFCR. Topologically, residues 293 to 305 are extracellular; sequence LEPAAAPCVSDTT. Residues 306 to 325 form a helical membrane-spanning segment; that stretch reads FSVFVWFGWANSSLNPVIYA. Topologically, residues 326–386 are cytoplasmic; the sequence is FNADFRKAFS…SRGGPYQFAL (61 aa).

Belongs to the G-protein coupled receptor 1 family.

The protein localises to the cell membrane. It localises to the cell projection. Its subcellular location is the cilium membrane. In terms of biological role, this is one of the five types (D1 to D5) of receptors for dopamine. The activity of this receptor is mediated by G proteins which activate adenylyl cyclase. This Oreochromis mossambicus (Mozambique tilapia) protein is D(1)-like dopamine receptor.